The primary structure comprises 394 residues: 1-deoxy-D-xylulose 5-phosphate reductoisomerase (394 aa).

The NADPH site is built by threonine 14, glycine 15, serine 16, isoleucine 17, glycine 40, and asparagine 128. Residue lysine 129 participates in 1-deoxy-D-xylulose 5-phosphate binding. Glutamate 130 contributes to the NADPH binding site. Residue aspartate 154 participates in Mn(2+) binding. The 1-deoxy-D-xylulose 5-phosphate site is built by serine 155, glutamate 156, serine 180, and histidine 203. Mn(2+) is bound at residue glutamate 156. Glycine 209 is a binding site for NADPH. Serine 216, asparagine 221, lysine 222, and glutamate 225 together coordinate 1-deoxy-D-xylulose 5-phosphate. Glutamate 225 provides a ligand contact to Mn(2+).

It belongs to the DXR family. Mg(2+) is required as a cofactor. Mn(2+) serves as cofactor.

It catalyses the reaction 2-C-methyl-D-erythritol 4-phosphate + NADP(+) = 1-deoxy-D-xylulose 5-phosphate + NADPH + H(+). The protein operates within isoprenoid biosynthesis; isopentenyl diphosphate biosynthesis via DXP pathway; isopentenyl diphosphate from 1-deoxy-D-xylulose 5-phosphate: step 1/6. Its function is as follows. Catalyzes the NADPH-dependent rearrangement and reduction of 1-deoxy-D-xylulose-5-phosphate (DXP) to 2-C-methyl-D-erythritol 4-phosphate (MEP). This chain is 1-deoxy-D-xylulose 5-phosphate reductoisomerase, found in Xylella fastidiosa (strain M23).